The following is a 205-amino-acid chain: uncharacterized protein (205 aa).

A run of 5 helical transmembrane segments spans residues 4–24 (LAFL…AIDD), 105–125 (KWFI…LWIL), 130–150 (FLLF…KIPN), 151–171 (WLFN…VPEC), and 182–202 (ITIP…KFII).

The protein resides in the cell membrane. This is an uncharacterized protein from Methanocaldococcus jannaschii (strain ATCC 43067 / DSM 2661 / JAL-1 / JCM 10045 / NBRC 100440) (Methanococcus jannaschii).